Reading from the N-terminus, the 366-residue chain is Growth hormone secretagogue receptor type 1 (366 aa).

The Extracellular portion of the chain corresponds to 1-40 (MWNATPSEEPGSNLTRAELGWDAPPGNDSLADELLQLFPA). N-linked (GlcNAc...) asparagine glycans are attached at residues Asn-13 and Asn-27. A helical membrane pass occupies residues 41 to 66 (PLLAGVTATCVALFVVGIAGNLLTML). Residues 67-72 (VVSRFR) are Cytoplasmic-facing. A helical membrane pass occupies residues 73 to 96 (ELRTTTNLYLSSMAFSDLLIFLCM). The Extracellular portion of the chain corresponds to 97–117 (PLDLVRLWQYRPWNFGDLLCK). Cys-116 and Cys-198 are disulfide-bonded. The helical transmembrane segment at 118–139 (LFQFVSESCTYATVLTITALSV) threads the bilayer. Over 140–162 (ERYFAICFPLRAKVVVTKGRVKL) the chain is Cytoplasmic. Residues 163–183 (VILVIWALAFCSAGPIFVLVG) traverse the membrane as a helical segment. At 184–211 (VEHENGTDPQDTNECRATEFAVRSGLLT) the chain is on the extracellular side. N-linked (GlcNAc...) asparagine glycosylation occurs at Asn-188. The helical transmembrane segment at 212–235 (IMVWVSSVFFFLPVFCLTVLYSLI) threads the bilayer. The Cytoplasmic portion of the chain corresponds to 236 to 263 (GRKLWRRKRGDGAVGSSLRDQNHRQTVK). The chain crosses the membrane as a helical span at residues 264–285 (MLAVVVFAFILCWLPFHVGRYL). Residues 286 to 302 (FSKSFEPGSLEIAQISQ) lie on the Extracellular side of the membrane. Residues 303 to 326 (YCNLVSFVLFYLSAAINPILYNIM) form a helical membrane-spanning segment. Over 327-366 (SKKYRVAVFKLLGFEPFSQRKLSTLKDESSRAWTKSSINT) the chain is Cytoplasmic.

It belongs to the G-protein coupled receptor 1 family.

The protein localises to the cell membrane. Functionally, receptor for ghrelin, coupled to G-alpha-11 proteins. Stimulates growth hormone secretion. Also binds other growth hormone releasing peptides (GHRP) (e.g. Met-enkephalin and GHRP-6) as well as non-peptide, low molecular weight secretagogues (e.g. L-692,429, MK-0677, adenosine). This is Growth hormone secretagogue receptor type 1 (GHSR) from Oryctolagus cuniculus (Rabbit).